The sequence spans 53 residues: ATP synthase protein 8 (53 aa).

The chain crosses the membrane as a helical span at residues 4 to 24 (MAPISWLLLFIIFSITFILFC).

The protein belongs to the ATPase protein 8 family. As to quaternary structure, F-type ATPases have 2 components, CF(1) - the catalytic core - and CF(0) - the membrane proton channel.

The protein resides in the mitochondrion membrane. In terms of biological role, mitochondrial membrane ATP synthase (F(1)F(0) ATP synthase or Complex V) produces ATP from ADP in the presence of a proton gradient across the membrane which is generated by electron transport complexes of the respiratory chain. F-type ATPases consist of two structural domains, F(1) - containing the extramembraneous catalytic core and F(0) - containing the membrane proton channel, linked together by a central stalk and a peripheral stalk. During catalysis, ATP synthesis in the catalytic domain of F(1) is coupled via a rotary mechanism of the central stalk subunits to proton translocation. Part of the complex F(0) domain. Minor subunit located with subunit a in the membrane. In Drosophila sechellia (Fruit fly), this protein is ATP synthase protein 8 (mt:ATPase8).